The sequence spans 75 residues: U9-theraphotoxin-Cg1a (75 aa).

Positions 1–21 (MKTLVLFIIFGLAALFLLSSA) are cleaved as a signal peptide. Residues 22–29 (NELEETER) constitute a propeptide that is removed on maturation. Disulfide bonds link Cys-31–Cys-46, Cys-38–Cys-51, and Cys-45–Cys-58.

The protein belongs to the neurotoxin 10 (Hwtx-1) family. 43 (Jztx-49) subfamily. In terms of tissue distribution, expressed by the venom gland.

It is found in the secreted. Functionally, probable ion channel inhibitor. The chain is U9-theraphotoxin-Cg1a from Chilobrachys guangxiensis (Chinese earth tiger tarantula).